We begin with the raw amino-acid sequence, 135 residues long: Small ribosomal subunit protein eS6 (135 aa).

Belongs to the eukaryotic ribosomal protein eS6 family.

The sequence is that of Small ribosomal subunit protein eS6 from Methanococcoides burtonii (strain DSM 6242 / NBRC 107633 / OCM 468 / ACE-M).